A 354-amino-acid polypeptide reads, in one-letter code: Serine/threonine-protein kinase-transforming protein mos (354 aa).

The region spanning 74–350 (VCLMHRLGSG…LLQRDLKAFR (277 aa)) is the Protein kinase domain. ATP-binding positions include 80 to 88 (LGSGGFGSV) and lysine 101. Catalysis depends on aspartate 209, which acts as the Proton acceptor.

The protein belongs to the protein kinase superfamily. Ser/Thr protein kinase family.

It carries out the reaction L-seryl-[protein] + ATP = O-phospho-L-seryl-[protein] + ADP + H(+). It catalyses the reaction L-threonyl-[protein] + ATP = O-phospho-L-threonyl-[protein] + ADP + H(+). The polypeptide is Serine/threonine-protein kinase-transforming protein mos (V-MOS) (Moloney murine sarcoma virus (strain ts110) (MoMSV)).